The primary structure comprises 533 residues: Acetone monooxygenase (methyl acetate-forming) (533 aa).

FAD contacts are provided by residues 43-46 (TWYW), 55-56 (DS), and Tyr-61. An NADP(+)-binding site is contributed by 53–55 (RFD). NADP(+) is bound by residues 183 to 189 (NGATGIQ), 206 to 207 (RT), and Trp-492.

The protein belongs to the FAD-binding monooxygenase family. As to quaternary structure, homotetramer. FAD is required as a cofactor.

It catalyses the reaction acetone + NADPH + O2 + H(+) = methyl acetate + NADP(+) + H2O. Plays an important role in the metabolism of acetone derived from propane oxidation. Catalyzes the oxidation of acetone to methyl acetate. Exhibits high catalytic efficiency towards various linear and cyclic ketones, such as butanone, 2-pentanone, 2-heptanone, 2-octanone, 2-nonanone, 2-decanone, cyclobutanone, cyclopentanone and cyclohexanone. Elicits the highest catalytic efficiency towards butanone and cyclobutanone. Is highly specific for NADPH and cannot use NADH. This is Acetone monooxygenase (methyl acetate-forming) from Gordonia sp. (strain TY-5).